The primary structure comprises 401 residues: Keratin-associated protein 10-4 (401 aa).

Repeat copies occupy residues 36 to 40 (CCEPP), 41 to 45 (CCAPS), 46 to 50 (CCAPA), 67 to 71 (CCPVT), 89 to 93 (CCQQS), 99 to 103 (CCASS), 109 to 113 (CCVPV), 114 to 118 (CCKTV), 119 to 123 (CCKPV), 124 to 128 (CCVPV), 129 to 133 (CCGDS), 135 to 139 (CCQQS), 145 to 149 (CCTSS), 155 to 159 (CCVPI), 160 to 164 (CCKPV), 172 to 176 (CCQQS), 186 to 190 (CCQAV), 208 to 212 (CCQQS), 218 to 222 (CCTSS), 228 to 232 (CCVPV), 233 to 237 (CCKTV), 238 to 242 (CCKPV), 250 to 254 (CCQQS), 270 to 274 (CCVPV), 275 to 279 (CCKPV), 280 to 284 (CCKPV), 297 to 301 (CCQQS), 307 to 311 (CCTSS), 317 to 321 (CCVPV), 322 to 326 (CCKPV), 339 to 343 (CCQQS), 349 to 353 (CCTTS), 354 to 358 (CCRPS), 373 to 377 (CCVPV), and 391 to 395 (CCRPA). The segment at 36 to 395 (CCEPPCCAPS…SCQPSCCRPA (360 aa)) is 36 X 5 AA repeats of C-C-X(3).

It belongs to the KRTAP type 10 family. Interacts with hair keratins. As to expression, restricted to hair root, not detected in any other tissues.

Its function is as follows. In the hair cortex, hair keratin intermediate filaments are embedded in an interfilamentous matrix, consisting of hair keratin-associated proteins (KRTAP), which are essential for the formation of a rigid and resistant hair shaft through their extensive disulfide bond cross-linking with abundant cysteine residues of hair keratins. The matrix proteins include the high-sulfur and high-glycine-tyrosine keratins. This is Keratin-associated protein 10-4 (KRTAP10-4) from Homo sapiens (Human).